The chain runs to 58 residues: COP9 signalosome complex subunit 6b (58 aa).

Belongs to the peptidase M67A family. CSN6 subfamily. As to quaternary structure, component of the CSN complex, probably composed of CSN1, CSN2, CSN3, CSN4, CSN5 (CSN5A or CSN5B), CSN6 (CSN6A or CSN6B), CSN7 and CSN8.

The protein resides in the cytoplasm. The protein localises to the nucleus. Component of the COP9 signalosome complex (CSN), a complex involved in various cellular and developmental processes such as photomorphogenesis and auxin and jasmonate responses. The CSN complex is an essential regulator of the ubiquitin (Ubl) conjugation pathway by mediating the deneddylation of the cullin subunits of SCF-type E3 ligase complexes, leading to decrease the Ubl ligase activity of SCF. It is involved in repression of photomorphogenesis in darkness by regulating the activity of COP1-containing Ubl ligase complexes. The sequence is that of COP9 signalosome complex subunit 6b (CSN6B) from Brassica oleracea (Wild cabbage).